A 276-amino-acid chain; its full sequence is Nickel import system permease protein NikC (276 aa).

5 consecutive transmembrane segments (helical) span residues 10–30 (LIFFVFVAFIFVVIVLQFFVS), 73–93 (LFVTVLTLIAIVVIGVTLGLF), 108–128 (FIDVGLSIPEFIIMIALASFF), 186–206 (IIPAIIVLMVVDFGKIILYIS), and 238–258 (IMLIAPASVIAITILIFNLTG). One can recognise an ABC transmembrane type-1 domain in the interval 69–258 (ARSTLFVTVL…ITILIFNLTG (190 aa)).

This sequence belongs to the binding-protein-dependent transport system permease family. OppBC subfamily. In terms of assembly, the complex is composed of two ATP-binding proteins (NikD and NikE), two transmembrane proteins (NikB and NikC) and a solute-binding protein (NikA).

It is found in the cell membrane. In terms of biological role, part of the ABC transporter complex NikABCDE (Opp2) involved in nickel import. Probably responsible for the translocation of the substrate across the membrane. The polypeptide is Nickel import system permease protein NikC (Staphylococcus aureus (strain USA300)).